Here is a 147-residue protein sequence, read N- to C-terminus: UPF0178 protein Patl_1318 (147 aa).

This sequence belongs to the UPF0178 family.

The polypeptide is UPF0178 protein Patl_1318 (Pseudoalteromonas atlantica (strain T6c / ATCC BAA-1087)).